A 607-amino-acid polypeptide reads, in one-letter code: Guanine nucleotide-binding protein-like 1 (607 aa).

Over residues 1–14 (MPRKKPFSVKQKKK) the composition is skewed to basic residues. Residues 1 to 81 (MPRKKPFSVK…GPRGYDPNRY (81 aa)) are disordered. The span at 15-26 (QLQDKRERKRGL) shows a compositional bias: basic and acidic residues. Phosphoserine occurs at positions 32, 33, and 34. Residues Thr48 and Thr50 each carry the phosphothreonine modification. Ser51 and Ser68 each carry phosphoserine. Residues 178-418 (WRQLWRVLEM…LCDCPGLIFP (241 aa)) enclose the CP-type G domain. 225–228 (NKVD) contributes to the GTP binding site. At Ser324 the chain carries Phosphoserine. GTP contacts are provided by residues 367–374 (GFPNVGKS) and 411–415 (DCPGL). Residues 547 to 607 (GPAGDEEEEE…PYALLGEDEC (61 aa)) form a disordered region. The span at 550–584 (GDEEEEEEEELSSSCEEEGEEDRDADEEGEGDEET) shows a compositional bias: acidic residues. Residues Ser561, Ser562, and Ser563 each carry the phosphoserine modification.

This sequence belongs to the TRAFAC class YlqF/YawG GTPase family.

In terms of biological role, possible regulatory or functional link with the histocompatibility cluster. This Homo sapiens (Human) protein is Guanine nucleotide-binding protein-like 1 (GNL1).